The primary structure comprises 693 residues: Glycine--tRNA ligase beta subunit (693 aa).

Belongs to the class-II aminoacyl-tRNA synthetase family. In terms of assembly, tetramer of two alpha and two beta subunits.

The protein resides in the cytoplasm. It catalyses the reaction tRNA(Gly) + glycine + ATP = glycyl-tRNA(Gly) + AMP + diphosphate. The polypeptide is Glycine--tRNA ligase beta subunit (Natranaerobius thermophilus (strain ATCC BAA-1301 / DSM 18059 / JW/NM-WN-LF)).